The chain runs to 93 residues: Aspartyl/glutamyl-tRNA(Asn/Gln) amidotransferase subunit C (93 aa).

It belongs to the GatC family. Heterotrimer of A, B and C subunits.

It catalyses the reaction L-glutamyl-tRNA(Gln) + L-glutamine + ATP + H2O = L-glutaminyl-tRNA(Gln) + L-glutamate + ADP + phosphate + H(+). The catalysed reaction is L-aspartyl-tRNA(Asn) + L-glutamine + ATP + H2O = L-asparaginyl-tRNA(Asn) + L-glutamate + ADP + phosphate + 2 H(+). Functionally, allows the formation of correctly charged Asn-tRNA(Asn) or Gln-tRNA(Gln) through the transamidation of misacylated Asp-tRNA(Asn) or Glu-tRNA(Gln) in organisms which lack either or both of asparaginyl-tRNA or glutaminyl-tRNA synthetases. The reaction takes place in the presence of glutamine and ATP through an activated phospho-Asp-tRNA(Asn) or phospho-Glu-tRNA(Gln). The chain is Aspartyl/glutamyl-tRNA(Asn/Gln) amidotransferase subunit C from Methanococcoides burtonii (strain DSM 6242 / NBRC 107633 / OCM 468 / ACE-M).